Here is a 297-residue protein sequence, read N- to C-terminus: Carbamate kinase (297 aa).

The protein belongs to the carbamate kinase family.

The protein localises to the cytoplasm. The catalysed reaction is hydrogencarbonate + NH4(+) + ATP = carbamoyl phosphate + ADP + H2O + H(+). The enzyme catalyses carbamate + ATP = carbamoyl phosphate + ADP. It carries out the reaction hydrogencarbonate + NH4(+) = carbamate + H2O + H(+). The protein operates within nitrogen metabolism; (S)-allantoin degradation. In terms of biological role, kinase involved in the anaerobic nitrogen utilization via the assimilation of allantoin. Catalyzes the transfer of a phosphate group from carbamoyl phosphate to ADP to produce ATP and leave carbamate, which spontaneously hydrolyzes to ammonia and hydrogencarbonate. The sequence is that of Carbamate kinase from Escherichia coli (strain K12).